An 872-amino-acid polypeptide reads, in one-letter code: Alanine--tRNA ligase (872 aa).

The Zn(2+) site is built by His567, His571, Cys669, and His673.

Belongs to the class-II aminoacyl-tRNA synthetase family. Zn(2+) serves as cofactor.

The protein localises to the cytoplasm. The catalysed reaction is tRNA(Ala) + L-alanine + ATP = L-alanyl-tRNA(Ala) + AMP + diphosphate. Its function is as follows. Catalyzes the attachment of alanine to tRNA(Ala) in a two-step reaction: alanine is first activated by ATP to form Ala-AMP and then transferred to the acceptor end of tRNA(Ala). Also edits incorrectly charged Ser-tRNA(Ala) and Gly-tRNA(Ala) via its editing domain. The polypeptide is Alanine--tRNA ligase (Streptococcus gordonii (strain Challis / ATCC 35105 / BCRC 15272 / CH1 / DL1 / V288)).